The primary structure comprises 636 residues: DNA mismatch repair protein MutL (636 aa).

A compositionally biased stretch (basic and acidic residues) spans 332 to 344 (HAGEQGDSLRTDI). 2 disordered regions span residues 332 to 360 (HAGEQGDSLRTDIADAPEQPGATATPADN) and 417 to 443 (ASAPADAAPAQASEPAAAPQADDSDDA). The span at 417-437 (ASAPADAAPAQASEPAAAPQA) shows a compositional bias: low complexity.

Belongs to the DNA mismatch repair MutL/HexB family.

Functionally, this protein is involved in the repair of mismatches in DNA. It is required for dam-dependent methyl-directed DNA mismatch repair. May act as a 'molecular matchmaker', a protein that promotes the formation of a stable complex between two or more DNA-binding proteins in an ATP-dependent manner without itself being part of a final effector complex. In Ralstonia nicotianae (strain ATCC BAA-1114 / GMI1000) (Ralstonia solanacearum), this protein is DNA mismatch repair protein MutL.